We begin with the raw amino-acid sequence, 480 residues long: Pyruvate kinase II (480 aa).

Arg36 is a binding site for substrate. Residues Asn38, Ser40, and Asp70 each coordinate K(+). 38 to 41 (NFSH) is a binding site for ATP. The ATP site is built by Arg77 and Lys160. Lys223 lines the substrate pocket. Glu225 serves as a coordination point for Mg(2+). Residues Gly251, Asp252, and Thr284 each coordinate substrate. A Mg(2+)-binding site is contributed by Asp252.

It belongs to the pyruvate kinase family. Homotetramer. It depends on Mg(2+) as a cofactor. K(+) serves as cofactor.

It carries out the reaction pyruvate + ATP = phosphoenolpyruvate + ADP + H(+). It functions in the pathway carbohydrate degradation; glycolysis; pyruvate from D-glyceraldehyde 3-phosphate: step 5/5. Allosterically activated by AMP and by several sugar phosphates. Belongs to type II PK. Its function is as follows. Catalyzes the formation of pyruvate in the last step of glycolysis, it is irreversible under physiological conditions. The reaction is critical for the control of metabolic flux in the second part of glycolysis. The sequence is that of Pyruvate kinase II (pykA) from Salmonella typhimurium (strain LT2 / SGSC1412 / ATCC 700720).